Reading from the N-terminus, the 179-residue chain is uncharacterized protein (179 aa).

This is an uncharacterized protein from Rickettsia conorii (strain ATCC VR-613 / Malish 7).